Reading from the N-terminus, the 160-residue chain is Ureidoglycolate lyase (160 aa).

It belongs to the ureidoglycolate lyase family. As to quaternary structure, homodimer. It depends on Ni(2+) as a cofactor.

It carries out the reaction (S)-ureidoglycolate = urea + glyoxylate. The protein operates within nitrogen metabolism; (S)-allantoin degradation. Its function is as follows. Catalyzes the catabolism of the allantoin degradation intermediate (S)-ureidoglycolate, generating urea and glyoxylate. Involved in the utilization of allantoin as nitrogen source. The sequence is that of Ureidoglycolate lyase from Salmonella typhimurium (strain LT2 / SGSC1412 / ATCC 700720).